Here is a 391-residue protein sequence, read N- to C-terminus: Phosphoglycerate kinase (391 aa).

Substrate contacts are provided by residues 19 to 21, R35, 58 to 61, R117, and R150; these read DYN and HMGR. ATP is bound by residues K201, E323, and 349 to 352; that span reads GGDT.

The protein belongs to the phosphoglycerate kinase family. In terms of assembly, monomer.

It localises to the cytoplasm. The catalysed reaction is (2R)-3-phosphoglycerate + ATP = (2R)-3-phospho-glyceroyl phosphate + ADP. The protein operates within carbohydrate degradation; glycolysis; pyruvate from D-glyceraldehyde 3-phosphate: step 2/5. The sequence is that of Phosphoglycerate kinase from Desulforapulum autotrophicum (strain ATCC 43914 / DSM 3382 / VKM B-1955 / HRM2) (Desulfobacterium autotrophicum).